The following is a 74-amino-acid chain: Putative sulfur carrier protein NMA0882 (74 aa).

Cys13 functions as the Cysteine persulfide intermediate in the catalytic mechanism.

It belongs to the sulfur carrier protein TusA family.

The polypeptide is Putative sulfur carrier protein NMA0882 (Neisseria meningitidis serogroup A / serotype 4A (strain DSM 15465 / Z2491)).